A 144-amino-acid chain; its full sequence is 3-hydroxyacyl-[acyl-carrier-protein] dehydratase FabZ (144 aa).

H51 is an active-site residue.

It belongs to the thioester dehydratase family. FabZ subfamily.

It localises to the cytoplasm. The enzyme catalyses a (3R)-hydroxyacyl-[ACP] = a (2E)-enoyl-[ACP] + H2O. In terms of biological role, involved in unsaturated fatty acids biosynthesis. Catalyzes the dehydration of short chain beta-hydroxyacyl-ACPs and long chain saturated and unsaturated beta-hydroxyacyl-ACPs. This is 3-hydroxyacyl-[acyl-carrier-protein] dehydratase FabZ (fabZ1) from Enterococcus faecalis (strain ATCC 700802 / V583).